A 312-amino-acid polypeptide reads, in one-letter code: Elongation factor Ts (312 aa).

The segment at 80–83 (TDFV) is involved in Mg(2+) ion dislocation from EF-Tu.

The protein belongs to the EF-Ts family.

The protein localises to the cytoplasm. Associates with the EF-Tu.GDP complex and induces the exchange of GDP to GTP. It remains bound to the aminoacyl-tRNA.EF-Tu.GTP complex up to the GTP hydrolysis stage on the ribosome. The protein is Elongation factor Ts of Maricaulis maris (strain MCS10) (Caulobacter maris).